The sequence spans 189 residues: Xanthine phosphoribosyltransferase (189 aa).

Xanthine contacts are provided by Leu20 and Asn27. Position 128–132 (128–132) interacts with 5-phospho-alpha-D-ribose 1-diphosphate; that stretch reads ANGKA. Lys156 is a xanthine binding site.

Belongs to the purine/pyrimidine phosphoribosyltransferase family. Xpt subfamily. As to quaternary structure, homodimer.

Its subcellular location is the cytoplasm. It carries out the reaction XMP + diphosphate = xanthine + 5-phospho-alpha-D-ribose 1-diphosphate. It participates in purine metabolism; XMP biosynthesis via salvage pathway; XMP from xanthine: step 1/1. Functionally, converts the preformed base xanthine, a product of nucleic acid breakdown, to xanthosine 5'-monophosphate (XMP), so it can be reused for RNA or DNA synthesis. The sequence is that of Xanthine phosphoribosyltransferase from Pseudomonas syringae pv. syringae (strain B728a).